Here is a 521-residue protein sequence, read N- to C-terminus: 2,3-bisphosphoglycerate-independent phosphoglycerate mutase (521 aa).

Mn(2+)-binding residues include aspartate 18 and serine 68. Serine 68 (phosphoserine intermediate) is an active-site residue. Residues histidine 129, arginine 158 to aspartate 159, arginine 190, arginine 196, arginine 266 to arginine 269, and lysine 343 each bind substrate. Positions 410, 414, 451, 452, and 470 each coordinate Mn(2+).

The protein belongs to the BPG-independent phosphoglycerate mutase family. In terms of assembly, monomer. It depends on Mn(2+) as a cofactor.

The catalysed reaction is (2R)-2-phosphoglycerate = (2R)-3-phosphoglycerate. The protein operates within carbohydrate degradation; glycolysis; pyruvate from D-glyceraldehyde 3-phosphate: step 3/5. In terms of biological role, catalyzes the interconversion of 2-phosphoglycerate and 3-phosphoglycerate. This Hydrogenovibrio crunogenus (strain DSM 25203 / XCL-2) (Thiomicrospira crunogena) protein is 2,3-bisphosphoglycerate-independent phosphoglycerate mutase.